The chain runs to 278 residues: Adenosylcobinamide-GDP ribazoletransferase (278 aa).

7 helical membrane passes run 35–55 (VVGI…NFIL), 62–82 (AVLP…TGAL), 116–136 (GALA…SLTI), 141–161 (AAVY…VVSC), 185–205 (LIVA…MPFI), 222–242 (LIIV…SKLI), and 257–277 (LLEI…TFFI).

This sequence belongs to the CobS family. Mg(2+) serves as cofactor.

Its subcellular location is the cell inner membrane. It carries out the reaction alpha-ribazole + adenosylcob(III)inamide-GDP = adenosylcob(III)alamin + GMP + H(+). It catalyses the reaction alpha-ribazole 5'-phosphate + adenosylcob(III)inamide-GDP = adenosylcob(III)alamin 5'-phosphate + GMP + H(+). It functions in the pathway cofactor biosynthesis; adenosylcobalamin biosynthesis; adenosylcobalamin from cob(II)yrinate a,c-diamide: step 7/7. In terms of biological role, joins adenosylcobinamide-GDP and alpha-ribazole to generate adenosylcobalamin (Ado-cobalamin). Also synthesizes adenosylcobalamin 5'-phosphate from adenosylcobinamide-GDP and alpha-ribazole 5'-phosphate. The chain is Adenosylcobinamide-GDP ribazoletransferase from Fusobacterium nucleatum subsp. nucleatum (strain ATCC 25586 / DSM 15643 / BCRC 10681 / CIP 101130 / JCM 8532 / KCTC 2640 / LMG 13131 / VPI 4355).